A 445-amino-acid chain; its full sequence is Putative transcription factor bHLH056 (445 aa).

Disordered regions lie at residues 36–70 (NQTH…PPHL), 224–260 (QIQP…AEMH), and 365–445 (PFPN…QPTA). Residues 231 to 246 (SKLKAREETHGTEEAR) show a composition bias toward basic and acidic residues. Residues 255-304 (RTAEMHNLAERRRREKINEKMKTLQQLIPRCNKSTKVSTLDDAIEYVKSL) enclose the bHLH domain. Residues 418–433 (QGQTTSQLSSGQASSS) show a composition bias toward low complexity.

In terms of assembly, homodimer.

The protein resides in the nucleus. This chain is Putative transcription factor bHLH056 (BHLH56), found in Arabidopsis thaliana (Mouse-ear cress).